Reading from the N-terminus, the 295-residue chain is Aspartate carbamoyltransferase catalytic subunit (295 aa).

2 residues coordinate carbamoyl phosphate: arginine 49 and threonine 50. Lysine 77 serves as a coordination point for L-aspartate. The carbamoyl phosphate site is built by arginine 99, histidine 127, and glutamine 130. Residues arginine 161 and arginine 212 each contribute to the L-aspartate site. Residues glycine 251 and proline 252 each contribute to the carbamoyl phosphate site.

It belongs to the aspartate/ornithine carbamoyltransferase superfamily. ATCase family. As to quaternary structure, heterododecamer (2C3:3R2) of six catalytic PyrB chains organized as two trimers (C3), and six regulatory PyrI chains organized as three dimers (R2).

It carries out the reaction carbamoyl phosphate + L-aspartate = N-carbamoyl-L-aspartate + phosphate + H(+). It participates in pyrimidine metabolism; UMP biosynthesis via de novo pathway; (S)-dihydroorotate from bicarbonate: step 2/3. Functionally, catalyzes the condensation of carbamoyl phosphate and aspartate to form carbamoyl aspartate and inorganic phosphate, the committed step in the de novo pyrimidine nucleotide biosynthesis pathway. The chain is Aspartate carbamoyltransferase catalytic subunit from Campylobacter jejuni subsp. jejuni serotype O:6 (strain 81116 / NCTC 11828).